The chain runs to 307 residues: Protoheme IX farnesyltransferase (307 aa).

Helical transmembrane passes span 32-52 (MGIVNSNTLTVFTGFWLALHF), 65-85 (FFTIVGSGLVMAGVCCLNNYI), 108-128 (PGFALTFGLVILLLGFVFLLL), 131-151 (PMAVLMGFIGAFTYVVLYSLW), 158-178 (LNTVVGSISGAVPPLIGWAAI), 186-206 (IAWMLFLIMFIWQIPHFLALA), 251-271 (LGITFMVIATLLNIGWIVLGF), and 287-307 (FVYSLNYLTILFVSMIVVTFF).

It belongs to the UbiA prenyltransferase family. Protoheme IX farnesyltransferase subfamily. In terms of assembly, interacts with CtaA.

Its subcellular location is the cell membrane. It carries out the reaction heme b + (2E,6E)-farnesyl diphosphate + H2O = Fe(II)-heme o + diphosphate. It functions in the pathway porphyrin-containing compound metabolism; heme O biosynthesis; heme O from protoheme: step 1/1. Converts heme B (protoheme IX) to heme O by substitution of the vinyl group on carbon 2 of heme B porphyrin ring with a hydroxyethyl farnesyl side group. This is Protoheme IX farnesyltransferase from Bacillus cereus (strain G9842).